A 1040-amino-acid polypeptide reads, in one-letter code: Multidrug resistance protein MdtB (1040 aa).

The next 12 membrane-spanning stretches (helical) occupy residues 16–36 (FIMRPVATTLLMVAILLAGII), 347–367 (LMMAIALVVMIIYLFLRNIPA), 369–389 (IIPGVAVPLSLIGTFAVMVFL), 396–416 (LTLMALTIATGFVVDDAIVVI), 440–460 (IGFTIISLTFSLIAVLIPLLF), 472–492 (FAITLAVAILISAVVSLTLTP), 537–557 (WLTLSVALSTLLLSVLLWVFI), 863–883 (LGSTVWLIVAAVVAMYIVLGI), 888–908 (FIHPITILSTLPTAGVGALLA), 911–931 (IAGSELDVIAIIGIILLIGIV), 968–988 (ILMTTLAALLGALPLMLSTGV), and 998–1018 (IGMVGGLIVSQVLTLFTTPVI).

This sequence belongs to the resistance-nodulation-cell division (RND) (TC 2.A.6) family. MdtB subfamily. In terms of assembly, part of a tripartite efflux system composed of MdtA, MdtB and MdtC. MdtB forms a heteromultimer with MdtC.

The protein localises to the cell inner membrane. Its function is as follows. The MdtABC tripartite complex confers resistance against novobiocin and deoxycholate. The chain is Multidrug resistance protein MdtB from Escherichia coli (strain 55989 / EAEC).